Here is a 607-residue protein sequence, read N- to C-terminus: Chaperone protein DnaK (607 aa).

The residue at position 174 (threonine 174) is a Phosphothreonine; by autocatalysis. The disordered stretch occupies residues alanine 571–lysine 607. Residues alanine 589–lysine 607 are compositionally biased toward basic and acidic residues.

The protein belongs to the heat shock protein 70 family.

Functionally, acts as a chaperone. The polypeptide is Chaperone protein DnaK (Desulforudis audaxviator (strain MP104C)).